The sequence spans 546 residues: Probable malate:quinone oxidoreductase (546 aa).

It belongs to the MQO family. FAD serves as cofactor.

It carries out the reaction (S)-malate + a quinone = a quinol + oxaloacetate. The protein operates within carbohydrate metabolism; tricarboxylic acid cycle; oxaloacetate from (S)-malate (quinone route): step 1/1. The protein is Probable malate:quinone oxidoreductase of Acinetobacter baumannii (strain ACICU).